Consider the following 397-residue polypeptide: Zinc finger CCCH domain-containing protein 33 (397 aa).

C3H1-type zinc fingers lie at residues 40 to 68 (RPGE…HPRD), 85 to 113 (RIGQ…HPRN), 131 to 159 (RSNE…HPQP), 274 to 302 (RPGQ…HPRD), and 320 to 348 (RPGE…HPMR). A disordered region spans residues 361 to 397 (EVVETSTGKSRRLSVSETRQAATTSSGKDTTIDNTQQ). Polar residues predominate over residues 364 to 397 (ETSTGKSRRLSVSETRQAATTSSGKDTTIDNTQQ).

The protein localises to the nucleus. This is Zinc finger CCCH domain-containing protein 33 (ZFN1) from Arabidopsis thaliana (Mouse-ear cress).